We begin with the raw amino-acid sequence, 245 residues long: Inner membrane protein YgaZ (245 aa).

Residues 1 to 24 (MESPTPQPAPGSATFMEGCKDSLP) lie on the Cytoplasmic side of the membrane. The helical transmembrane segment at 25–45 (IVISYIPVAFAFGLNATRLGF) threads the bilayer. The Periplasmic segment spans residues 46–63 (SPLESVFFSCIIYAGASQ). Residues 64–84 (FVITAMLAAGSSLWIAALTVM) traverse the membrane as a helical segment. Topologically, residues 85-109 (AMDVRHVLYGPSLRSRIIQRLQKSK) are cytoplasmic. Residues 110–130 (TALWAFGLTDEVFAAATAKLV) traverse the membrane as a helical segment. Over 131 to 140 (RNNRRWSENW) the chain is Periplasmic. The helical transmembrane segment at 141–161 (MIGIAFSSWSSWVFGTVIGAF) threads the bilayer. Over 162–172 (SGSGLLQGYPA) the chain is Cytoplasmic. Residues 173–193 (VEAALGFMLPALFMSFLLASF) form a helical membrane-spanning segment. Residues 194–205 (QRKQSLCVTAAL) lie on the Periplasmic side of the membrane. Residues 206-226 (VGALAGVTLFSIPVAILAGIV) form a helical membrane-spanning segment. Over 227–245 (CGCLTALIQAFWQGAPDEL) the chain is Cytoplasmic.

It belongs to the AzlC family.

The protein localises to the cell inner membrane. This Escherichia coli (strain K12) protein is Inner membrane protein YgaZ (ygaZ).